The primary structure comprises 401 residues: MAFLSLFLCLVFSSPLMAMPPALQGRKAISPASILKGPSTDNGARDFHGRKFPHFMMQLYQNIISRRDKDLSNLEHPTLQESDTVQSFIAKSYTTVGNHWTLFFDMSSISTSNELKLAELRICLPSFGKSHSVTVEIYHTKDTKEKLFMGSFKTKISSALDADCKVFNLTMVLHNYLIRGKRLIKDEYIQAKGLLLRDLEKSAAEKGAENVDTLKQDKYHVSDFAAERIILVVFAKERSQAKPDPPSLGKQLFPLKYGMADNANKVNGFRRLRRNKKEKTRIDVGTTPPKPVEEIKPKCRKVDMFVDFQKIGWGSWIVYPKAYNAYRCESACAVPLNETDDATNYSYIKSLLPLSDTERRECPSCVPVKMRSMSMLYYENEDFVLRHHEEMIVEECGFKDI.

The signal sequence occupies residues 1 to 18 (MAFLSLFLCLVFSSPLMA). The propeptide occupies 19 to 274 (MPPALQGRKA…KVNGFRRLRR (256 aa)). Residues N168, N337, and N344 are each glycosylated (N-linked (GlcNAc...) asparagine). 2 disulfide bridges follow: C299–C365 and C328–C396.

This sequence belongs to the TGF-beta family. Monomer. The propeptide region interacts with bmp4 in a non-covalent manner. As to expression, expressed in the dorsal marginal region of late blastula, becoming restricted to the Spemann organizer at the early gastrula stage.

Its subcellular location is the secreted. Its function is as follows. Exhibits mesoderm-dorsalizing activity and neural-inducing activity, but lacks mesoderm-inducing activity. Regulates the expression of specific mesodermal and neural genes. Induces convergent extension movements at the embryonic midline by activating the fgf signaling pathway to induce t/bra expression in the organizer region. Acts with wnt11 to induce Spemann organizer cells and induce axis formation. The unprocessed protein antagonizes bmp-signaling. This chain is Nodal homolog 3-A, found in Xenopus tropicalis (Western clawed frog).